Reading from the N-terminus, the 375-residue chain is Queuine tRNA-ribosyltransferase (375 aa).

The active-site Proton acceptor is the Asp89. Substrate-binding positions include 89 to 93 (DSGGF), Asp143, Gln187, and Gly214. The segment at 245-251 (GVGKPED) is RNA binding. The active-site Nucleophile is the Asp264. The segment at 269 to 273 (TRNAR) is RNA binding; important for wobble base 34 recognition. Zn(2+) contacts are provided by Cys302, Cys304, Cys307, and His333.

This sequence belongs to the queuine tRNA-ribosyltransferase family. In terms of assembly, homodimer. Within each dimer, one monomer is responsible for RNA recognition and catalysis, while the other monomer binds to the replacement base PreQ1. Requires Zn(2+) as cofactor.

It catalyses the reaction 7-aminomethyl-7-carbaguanine + guanosine(34) in tRNA = 7-aminomethyl-7-carbaguanosine(34) in tRNA + guanine. It functions in the pathway tRNA modification; tRNA-queuosine biosynthesis. Catalyzes the base-exchange of a guanine (G) residue with the queuine precursor 7-aminomethyl-7-deazaguanine (PreQ1) at position 34 (anticodon wobble position) in tRNAs with GU(N) anticodons (tRNA-Asp, -Asn, -His and -Tyr). Catalysis occurs through a double-displacement mechanism. The nucleophile active site attacks the C1' of nucleotide 34 to detach the guanine base from the RNA, forming a covalent enzyme-RNA intermediate. The proton acceptor active site deprotonates the incoming PreQ1, allowing a nucleophilic attack on the C1' of the ribose to form the product. After dissociation, two additional enzymatic reactions on the tRNA convert PreQ1 to queuine (Q), resulting in the hypermodified nucleoside queuosine (7-(((4,5-cis-dihydroxy-2-cyclopenten-1-yl)amino)methyl)-7-deazaguanosine). This chain is Queuine tRNA-ribosyltransferase, found in Shigella flexneri serotype 5b (strain 8401).